The primary structure comprises 219 residues: MKKRVYLIAAVVSGALAVSGCTTNPYTGEREAGKSAIGAGLGSLVGAGIGALSSSKKDRGKGALIGAAAGAALGGGVGYYMDVQEAKLRDKMRGTGVSVTRSGDNIILNMPNNVTFDSSSATLKPAGANTLTGVAMVLKEYPKTAVNVIGYTDSTGGHDLNMRLSQQRADSVASALITQGVDASRIRTQGLGPANPIASNSTAEGKAQNRRVEITLSPL.

Positions 1 to 20 (MKKRVYLIAAVVSGALAVSG) are cleaved as a signal peptide. The N-palmitoyl cysteine moiety is linked to residue cysteine 21. The S-diacylglycerol cysteine moiety is linked to residue cysteine 21. The next 2 helical transmembrane spans lie at 37–55 (IGAG…LSSS) and 62–84 (GALI…MDVQ). The 117-residue stretch at 103–219 (GDNIILNMPN…RRVEITLSPL (117 aa)) folds into the OmpA-like domain.

It localises to the cell inner membrane. It is found in the cell outer membrane. In terms of biological role, suppresses temperature-sensitive mutations in BamB when overexpressed. This Escherichia coli (strain K12) protein is Probable lipoprotein YiaD (yiaD).